We begin with the raw amino-acid sequence, 157 residues long: Large ribosomal subunit protein uL13m (157 aa).

Residues 1-29 constitute a mitochondrion transit peptide; sequence MSTLNGQTALAYAKVWHHVSAKNVPLGRL.

It belongs to the universal ribosomal protein uL13 family. Component of the mitochondrial large ribosomal subunit (mt-LSU). Mature yeast 74S mitochondrial ribosomes consist of a small (37S) and a large (54S) subunit. The 37S small subunit contains a 15S ribosomal RNA (15S mt-rRNA) and at least 32 different proteins. The 54S large subunit contains a 21S rRNA (21S mt-rRNA) and at least 45 different proteins.

It localises to the mitochondrion. In terms of biological role, component of the mitochondrial ribosome (mitoribosome), a dedicated translation machinery responsible for the synthesis of mitochondrial genome-encoded proteins, including at least some of the essential transmembrane subunits of the mitochondrial respiratory chain. The mitoribosomes are attached to the mitochondrial inner membrane and translation products are cotranslationally integrated into the membrane. This Schizosaccharomyces pombe (strain 972 / ATCC 24843) (Fission yeast) protein is Large ribosomal subunit protein uL13m.